We begin with the raw amino-acid sequence, 251 residues long: Cell division protein ZapD (251 aa).

This sequence belongs to the ZapD family. In terms of assembly, interacts with FtsZ.

The protein localises to the cytoplasm. Its function is as follows. Cell division factor that enhances FtsZ-ring assembly. Directly interacts with FtsZ and promotes bundling of FtsZ protofilaments, with a reduction in FtsZ GTPase activity. The sequence is that of Cell division protein ZapD from Burkholderia multivorans (strain ATCC 17616 / 249).